We begin with the raw amino-acid sequence, 572 residues long: Frizzled-7 (572 aa).

Residues methionine 1 to alanine 32 form the signal peptide. Residues glutamine 33–tryptophan 254 lie on the Extracellular side of the membrane. Residues proline 44 to glutamine 163 form the FZ domain. Intrachain disulfides connect cysteine 49/cysteine 110, cysteine 57/cysteine 103, cysteine 94/cysteine 131, cysteine 120/cysteine 160, and cysteine 124/cysteine 148. A glycan (N-linked (GlcNAc...) asparagine) is linked at asparagine 63. Residue asparagine 164 is glycosylated (N-linked (GlcNAc...) asparagine). The chain crosses the membrane as a helical span at residues valine 255–valine 275. Over aspartate 276–proline 286 the chain is Cytoplasmic. A helical membrane pass occupies residues isoleucine 287–leucine 307. Topologically, residues glutamate 308–cysteine 334 are extracellular. The helical transmembrane segment at threonine 335–leucine 355 threads the bilayer. The Cytoplasmic segment spans residues serine 356–glutamine 377. The helical transmembrane segment at tyrosine 378–glycine 398 threads the bilayer. At glutamine 399–glycine 421 the chain is on the extracellular side. The helical transmembrane segment at phenylalanine 422–phenylalanine 442 threads the bilayer. At valine 443 to arginine 468 the chain is on the cytoplasmic side. A helical transmembrane segment spans residues isoleucine 469–tyrosine 489. The Extracellular portion of the chain corresponds to glutamate 490–threonine 526. The helical transmembrane segment at valine 527–tryptophan 547 threads the bilayer. Residues serine 548–valine 572 are Cytoplasmic-facing. A Lys-Thr-X-X-X-Trp motif, mediates interaction with the PDZ domain of Dvl family members motif is present at residues lysine 550–tryptophan 555. The PDZ-binding signature appears at threonine 570 to valine 572.

Belongs to the G-protein coupled receptor Fz/Smo family. In terms of assembly, interacts with MAGI3. Interacts with DVL1. Interacts with CCDC88C/DAPLE; the interaction displaces DVL1 from FZD7, leading to inhibition of canonical Wnt signaling and triggering of non-canonical Wnt responses. Interacts with MYOC. Binds to SDCBP; this interaction is increased by inositol trisphosphate (IP3). Interacts with glypican GPC3. Post-translationally, ubiquitinated by ZNRF3, leading to its degradation by the proteasome.

The protein resides in the cell membrane. It localises to the endosome membrane. Its function is as follows. Receptor for Wnt proteins. Most frizzled receptors are coupled to the beta-catenin canonical signaling pathway, which leads to the activation of disheveled proteins, inhibition of GSK-3 kinase, nuclear accumulation of beta-catenin and activation of Wnt target genes. A second signaling pathway involving PKC and calcium fluxes has been seen for some family members, but it is not yet clear if it represents a distinct pathway or if it can be integrated in the canonical pathway, as PKC seems to be required for Wnt-mediated inactivation of GSK-3 kinase. Both pathways seem to involve interactions with G-proteins. Activation by WNT8 induces expression of beta-catenin target genes. Following ligand activation, binds to CCDC88C/DAPLE which displaces DVL1 from FZD7 and leads to inhibition of canonical Wnt signaling, activation of G-proteins by CCDC88C and triggering of non-canonical Wnt responses. May be involved in transduction and intercellular transmission of polarity information during tissue morphogenesis and/or in differentiated tissues. This chain is Frizzled-7 (Fzd7), found in Mus musculus (Mouse).